The primary structure comprises 66 residues: Protein translocase subunit SecE (66 aa).

The helical transmembrane segment at 29-49 (LIASTLVVVAAVFIFSLICLV) threads the bilayer.

The protein belongs to the SecE/SEC61-gamma family. Component of the Sec protein translocase complex. Heterotrimer consisting of SecY, SecE and SecG subunits. The heterotrimers can form oligomers, although 1 heterotrimer is thought to be able to translocate proteins. Interacts with the ribosome. Interacts with SecDF, and other proteins may be involved. Interacts with SecA.

It is found in the cell inner membrane. In terms of biological role, essential subunit of the Sec protein translocation channel SecYEG. Clamps together the 2 halves of SecY. May contact the channel plug during translocation. The protein is Protein translocase subunit SecE of Rickettsia typhi (strain ATCC VR-144 / Wilmington).